Consider the following 683-residue polypeptide: MSEEKAKSNTSRAIGIDLGTTFSCVAGYISGKVEVITNQDGERTTPSVVSFDENNCTVVGTAARNMVGSDPMSVIFDAKRMIGREFDDPKIQNAIKGWPFKVVRYNHREKREEPNKVSEGSNSYDNIAIKITRNGKTNYYAPVEISGKVLLYLKNAAEARLGGTVDSAVVTVPAYFEEPQKDVTKAAATIAGFDPNKVRLLAEPTAAAMAYGHIQTQKNANFSAKEDVLVFDLGGGTFDVSLLDFEFNGAAGSLGIVKAIDGDTFLGGQDFDNLLINYCISEFLKKNSSIKQSDLKESALLRLRAECTRVKAVLSSATSSAIYVPCFHMTDDLNVQITRARFELLCDHLFRRCMERTKGCLLRSAGVPEVEYSADGSKLLLNPSLEKTLNEVKNNISKVLLVGGSSRIPKIKALLAEYFGAHKVIEPVNADEAVAYGAAYQAASIYSDAVDAGSSLLLIDCVPLNLSIETAGGVATALIHCGDNIPIKKTETFTTYEDNQTAVTINVYEGNRAMCKDNKKIGSFNLDGIIAAPRGVPKIEVTFDVDHNGILIVTAQDKQTGKENQIKVTNSQNRLSQEEIERMTKEARDNEQRDNETKEKMGKRMAFDQAISSFKAFVEKANNISEEKKSESLRVIKENEEWLSNAQRPEDFEVEELERRSNDFQSFTSDIMKDVGMGGAPAA.

Belongs to the heat shock protein 70 family.

It is found in the cytoplasm. This chain is Heat shock protein homolog ECU03_0520, found in Encephalitozoon cuniculi (strain GB-M1) (Microsporidian parasite).